Here is a 221-residue protein sequence, read N- to C-terminus: MVHYVKMEDGKVMPIQEMLKSIERYNPEHLKVIEAYVEEQARENQYDLEANLACLKLYQFNPHLLNLDITYIILLKALTNFPHTDFVLCKCLLLPAQMNDETVKEIIYLADILEKCDFSLFWSRLAKHPENYQKISGFHDSIRKFVCHVVGITFQTIERGYLMQLLGNVEEKVLLSWLKRYGWKEEGGLVTIATQEDNIKTKHITEKIEFDNLAPLMANCL.

Residues 46–215 (YDLEANLACL…EKIEFDNLAP (170 aa)) enclose the PCI domain.

It belongs to the eIF-3 subunit K family. As to quaternary structure, component of the eukaryotic translation initiation factor 3 (eIF-3) complex.

It localises to the cytoplasm. Its function is as follows. Component of the eukaryotic translation initiation factor 3 (eIF-3) complex, which is involved in protein synthesis of a specialized repertoire of mRNAs and, together with other initiation factors, stimulates binding of mRNA and methionyl-tRNAi to the 40S ribosome. The eIF-3 complex specifically targets and initiates translation of a subset of mRNAs involved in cell proliferation. The chain is Eukaryotic translation initiation factor 3 subunit K from Anopheles gambiae (African malaria mosquito).